The following is a 176-amino-acid chain: Ribosome rescue factor SmrB (176 aa).

In terms of domain architecture, Smr spans 93 to 168 (LDLHGYRQSE…GDAALLVLID (76 aa)).

It belongs to the SmrB family. In terms of assembly, associates with collided ribosomes, but not with correctly translating polysomes.

Its function is as follows. Acts as a ribosome collision sensor. Detects stalled/collided disomes (pairs of ribosomes where the leading ribosome is stalled and a second ribosome has collided with it) and endonucleolytically cleaves mRNA at the 5' boundary of the stalled ribosome. Stalled/collided disomes form a new interface (primarily via the 30S subunits) that binds SmrB. Cleaved mRNA becomes available for tmRNA ligation, leading to ribosomal subunit dissociation and rescue of stalled ribosomes. The polypeptide is Ribosome rescue factor SmrB (Shewanella baltica (strain OS223)).